The chain runs to 622 residues: Probable potassium transport system protein Kup (622 aa).

The next 12 helical transmembrane spans lie at 9 to 29, 52 to 72, 101 to 121, 137 to 157, 169 to 189, 213 to 233, 247 to 267, 287 to 309, 337 to 357, 363 to 383, 396 to 416, and 419 to 439; these read LPAVTLAAIGVVYGDIGTSPL, FLSLIFWALILVVSVKYLAFV, VLLVLGLIGGGFFYGEVVITP, PALTPYILPVAIAVLTALFVI, FGPVMLLWFFSLGTLGAISIF, VAFFSLGSVVLAITGVEALYA, WFTVALPALLLNYFGQGALIL, FPMVILSTMATVIASQAVISGVF, IYIPFVNWMLYIAVLIVVVTF, LAAAYGIAVTGTMVITTILAC, VVKIILISLLLIDVPLFLANV, and FFAGGWLPVMLGAIMFMVMAT.

The protein belongs to the HAK/KUP transporter (TC 2.A.72) family.

Its subcellular location is the cell inner membrane. It carries out the reaction K(+)(in) + H(+)(in) = K(+)(out) + H(+)(out). In terms of biological role, transport of potassium into the cell. Likely operates as a K(+):H(+) symporter. The sequence is that of Probable potassium transport system protein Kup from Tolumonas auensis (strain DSM 9187 / NBRC 110442 / TA 4).